Consider the following 886-residue polypeptide: Protein O-mannosyltransferase 1 (886 aa).

2 stretches are compositionally biased toward polar residues: residues 1–10 and 18–34; these read MSATYTNTIT and VRQQQQHQWTGSDLSGE. Disordered stretches follow at residues 1–37 and 88–161; these read MSATYTNTITQRRKTAKVRQQQQHQWTGSDLSGESNE and RGSV…KTAN. Positions 105-139 are enriched in low complexity; that stretch reads PTPVATPKQASPSPTSDRSRSLSRSPSPSRSRSLS. 2 N-linked (GlcNAc...) asparagine glycosylation sites follow: Asn161 and Asn242. The next 4 membrane-spanning stretches (helical) occupy residues 256–276, 310–330, 349–369, and 398–418; these read MPIFWFRFLPAMCGSLLAPAV, VLMESMLLLATTVGIACLLRF, VCLGAAGTVKYVGFLALGLAF, and LLIFVGIPLAVYLGVFYIHFK. 3 MIR domains span residues 450–511, 522–579, and 585–642; these read PLAV…VKRP, PDII…VEIL, and GDIW…VEEH. The next 3 membrane-spanning stretches (helical) occupy residues 727–747, 791–811, and 835–855; these read ILLWYTATMGILVYAGLLAFY, LFLHNYLPAFVFKLLLLCFVV, and LMLILWLVGVLSIFSKFIPFS.

Belongs to the glycosyltransferase 39 family. As to quaternary structure, interacts with tw/POMT2. In terms of tissue distribution, at the cellular blastoderm stage, expression accumulates in the ventrally located mesoderm primordium. At germ band extension, mesoderm expression is seen as stripes of strong expression. A very strong signal is also detected in the invaginating gut. As the germ band retracts, mesodermal expression decays and becomes restricted to somatic muscle precursors. After dorsal closure, expression has disappeared from the mesoderm and remains in the endoderm. Some expression is detected in a few cells of the head and the pharyngeal muscles.

The protein resides in the endoplasmic reticulum membrane. It carries out the reaction a di-trans,poly-cis-dolichyl beta-D-mannosyl phosphate + L-seryl-[protein] = 3-O-(alpha-D-mannosyl)-L-seryl-[protein] + a di-trans,poly-cis-dolichyl phosphate + H(+). The catalysed reaction is a di-trans,poly-cis-dolichyl beta-D-mannosyl phosphate + L-threonyl-[protein] = 3-O-(alpha-D-mannosyl)-L-threonyl-[protein] + a di-trans,poly-cis-dolichyl phosphate + H(+). The protein operates within protein modification; protein glycosylation. Its function is as follows. Rt/POMT1 and tw/POMT2 function as a protein O-mannosyltransferase in association with each other to generate and maintain normal muscle development. The sequence is that of Protein O-mannosyltransferase 1 from Drosophila melanogaster (Fruit fly).